The chain runs to 1157 residues: ATP-dependent helicase/deoxyribonuclease subunit B (1157 aa).

A UvrD-like helicase ATP-binding domain is found at 1 to 278 (MTLQIIAGRS…FFLENKRAKT (278 aa)). 8–15 (GRSGTGKT) provides a ligand contact to ATP. The UvrD-like helicase C-terminal domain maps to 272-590 (ENKRAKTESL…VLSDMENAKL (319 aa)). Residues C794, C1115, C1118, and C1124 each coordinate [4Fe-4S] cluster.

This sequence belongs to the helicase family. AddB/RexB type 1 subfamily. Heterodimer of AddA and AddB. Mg(2+) is required as a cofactor. [4Fe-4S] cluster serves as cofactor.

The heterodimer acts as both an ATP-dependent DNA helicase and an ATP-dependent, dual-direction single-stranded exonuclease. Recognizes the chi site generating a DNA molecule suitable for the initiation of homologous recombination. The AddB subunit has 5' -&gt; 3' nuclease activity but not helicase activity. The protein is ATP-dependent helicase/deoxyribonuclease subunit B of Listeria monocytogenes serotype 4a (strain HCC23).